We begin with the raw amino-acid sequence, 77 residues long: Sec-independent protein translocase protein TatA (77 aa).

A helical membrane pass occupies residues 1 to 21 (MGGISIWQLLIIALIVVLLFG). Basic and acidic residues-rich tracts occupy residues 47 to 56 (EKKALEDKEA) and 65 to 77 (TEKK…KEQA). Positions 47–77 (EKKALEDKEAAAQTTQQATEKKPEADKKEQA) are disordered.

Belongs to the TatA/E family. As to quaternary structure, the Tat system comprises two distinct complexes: a TatABC complex, containing multiple copies of TatA, TatB and TatC subunits, and a separate TatA complex, containing only TatA subunits. Substrates initially bind to the TatABC complex, which probably triggers association of the separate TatA complex to form the active translocon.

It is found in the cell inner membrane. Functionally, part of the twin-arginine translocation (Tat) system that transports large folded proteins containing a characteristic twin-arginine motif in their signal peptide across membranes. TatA could form the protein-conducting channel of the Tat system. This is Sec-independent protein translocase protein TatA from Shewanella amazonensis (strain ATCC BAA-1098 / SB2B).